The chain runs to 360 residues: Lipid-A-disaccharide synthase (360 aa).

It belongs to the LpxB family.

The catalysed reaction is a lipid X + a UDP-2-N,3-O-bis[(3R)-3-hydroxyacyl]-alpha-D-glucosamine = a lipid A disaccharide + UDP + H(+). It functions in the pathway bacterial outer membrane biogenesis; LPS lipid A biosynthesis. In terms of biological role, condensation of UDP-2,3-diacylglucosamine and 2,3-diacylglucosamine-1-phosphate to form lipid A disaccharide, a precursor of lipid A, a phosphorylated glycolipid that anchors the lipopolysaccharide to the outer membrane of the cell. The polypeptide is Lipid-A-disaccharide synthase (Helicobacter pylori (strain G27)).